A 241-amino-acid chain; its full sequence is Cytochrome b6-f complex iron-sulfur subunit 2, cyanelle (241 aa).

The transit peptide at 1 to 62 (MSAFACSAVA…AAKATTFSIS (62 aa)) directs the protein to the cyanelle. Residues 83–103 (LLGAIAGPTIGAGGPFVSFLV) traverse the membrane as a helical segment. In terms of domain architecture, Rieske spans 127 to 223 (VEKWLETXKP…VNVLEDGVVA (97 aa)). [2Fe-2S] cluster-binding residues include C169, H171, C187, and H190. Residues C174 and C189 are joined by a disulfide bond.

It belongs to the Rieske iron-sulfur protein family. As to quaternary structure, the 4 large subunits of the cytochrome b6-f complex are cytochrome b6, subunit IV (17 kDa polypeptide, petD), cytochrome f and the Rieske protein, while the 4 small subunits are petG, petL, petM and petN. The complex functions as a dimer. The cofactor is [2Fe-2S] cluster.

The protein localises to the plastid. It localises to the cyanelle thylakoid membrane. The catalysed reaction is 2 oxidized [plastocyanin] + a plastoquinol + 2 H(+)(in) = 2 reduced [plastocyanin] + a plastoquinone + 4 H(+)(out). Functionally, component of the cytochrome b6-f complex, which mediates electron transfer between photosystem II (PSII) and photosystem I (PSI), cyclic electron flow around PSI, and state transitions. The protein is Cytochrome b6-f complex iron-sulfur subunit 2, cyanelle (petC-2) of Cyanophora paradoxa.